A 518-amino-acid polypeptide reads, in one-letter code: Probable Xaa-Pro aminopeptidase HCDG_07916 (518 aa).

The Mn(2+) site is built by aspartate 289, aspartate 300, glutamate 437, and glutamate 475.

Belongs to the peptidase M24B family. It depends on Mn(2+) as a cofactor.

The enzyme catalyses Release of any N-terminal amino acid, including proline, that is linked to proline, even from a dipeptide or tripeptide.. Functionally, catalyzes the removal of a penultimate prolyl residue from the N-termini of peptides. The polypeptide is Probable Xaa-Pro aminopeptidase HCDG_07916 (Ajellomyces capsulatus (strain H143) (Darling's disease fungus)).